The primary structure comprises 464 residues: Asparagine--tRNA ligase (464 aa).

It belongs to the class-II aminoacyl-tRNA synthetase family. Homodimer.

The protein localises to the cytoplasm. It carries out the reaction tRNA(Asn) + L-asparagine + ATP = L-asparaginyl-tRNA(Asn) + AMP + diphosphate + H(+). The protein is Asparagine--tRNA ligase of Acetivibrio thermocellus (strain ATCC 27405 / DSM 1237 / JCM 9322 / NBRC 103400 / NCIMB 10682 / NRRL B-4536 / VPI 7372) (Clostridium thermocellum).